A 547-amino-acid chain; its full sequence is Oncoprotein-induced transcript 3 protein (547 aa).

An N-terminal signal peptide occupies residues 1-19 (MPQLLLLACLLIIVTRVAP). 2 N-linked (GlcNAc...) asparagine glycosylation sites follow: Asn-89 and Asn-116. The 41-residue stretch at 182–222 (DENECEQNNGGCSEICVNLKNSYRCECGIGRVLRSDGKTCE) folds into the EGF-like; calcium-binding domain. Disulfide bonds link Cys-186–Cys-197, Cys-193–Cys-206, and Cys-208–Cys-221. Residues 267–516 (FCKSNTIEVS…SRCAQGCHRR (250 aa)) form the ZP domain. Asn-299 is a glycosylation site (N-linked (GlcNAc...) asparagine). A disordered region spans residues 520–547 (EASTEGEDASGPRSQMLTGGPISIDWED).

It is found in the nucleus envelope. In terms of biological role, may be involved in hepatocellular function and development. This Bos taurus (Bovine) protein is Oncoprotein-induced transcript 3 protein (OIT3).